A 498-amino-acid polypeptide reads, in one-letter code: Cytotardin (498 aa).

The interval 18–58 (DRVHSKDELQALNTRLAKYIDKIRNLENENVALQRQLQTAE) is coil 1A. Residues 22-378 (SKDELQALNT…KLLSGEEQRL (357 aa)) enclose the IF rod domain. The linker 1 stretch occupies residues 59–69 (QTTVTEIHRVS). The coil 1B stretch occupies residues 70–213 (KNYDEELAKL…ENLREEKSQR (144 aa)). The segment at 214 to 231 (QYLLHDLQRGLQDEFESK) is linker 2. The segment at 232–371 (LVQQLNELRA…AELATYNKLL (140 aa)) is coil 2. A disordered region spans residues 381–425 (DGSGTVIRRPTGGATGTGSGIYGGTGSGGYSRDIGSTTTTKTTYT). Positions 393–409 (GATGTGSGIYGGTGSGG) are enriched in gly residues.

This sequence belongs to the intermediate filament family.

The protein resides in the cytoplasm. Its subcellular location is the cell cortex. Its function is as follows. Intermediate filament (IF) protein that forms both short filaments and extensive cytoskeletal networks which most likely are homomeric. Some of the cytotardin arrays display cage-like perinuclear structures, while others are located in the periphery close to the cell membrane. The entire tardigrade body is ensheathed by a grid of belt-like filaments formed by the cytotardin protein, which retain their integrity even in contracted specimens. The belt-like structures encircling each epidermal cell might help to resist the shearing forces that arise during freezing and thawing cycles, whereas the dense meshwork at the basis of each claw and around the stylets might provide the tissue stability necessary for locomotion and feeding. This Hypsibius exemplaris (Freshwater tardigrade) protein is Cytotardin.